A 36-amino-acid chain; its full sequence is Photosystem I reaction center subunit VIII (36 aa).

The chain crosses the membrane as a helical span at residues 6 to 28 (LPSIFVPLIGLFFPAIAMASLFL).

Belongs to the PsaI family.

Its subcellular location is the plastid. The protein resides in the chloroplast thylakoid membrane. In terms of biological role, may help in the organization of the PsaL subunit. This is Photosystem I reaction center subunit VIII from Amborella trichopoda.